A 282-amino-acid polypeptide reads, in one-letter code: Flagellin (282 aa).

Belongs to the bacterial flagellin family.

It is found in the secreted. The protein localises to the bacterial flagellum. In terms of biological role, flagellin is the subunit protein which polymerizes to form the filaments of bacterial flagella. The flagellum is required to cause a persistent disease in a murine model of infection. This is Flagellin (fliC) from Brucella melitensis biotype 1 (strain ATCC 23456 / CCUG 17765 / NCTC 10094 / 16M).